The primary structure comprises 336 residues: CENP-A histone chaperone scm3 (336 aa).

The disordered stretch occupies residues 243-269 (RRRNPLLSSPKTPLRRSFSKSKVRNSN). Positions 255–269 (PLRRSFSKSKVRNSN) are enriched in basic residues.

The protein resides in the cytoplasm. It localises to the nucleus. In terms of biological role, centromeric protein that plays a central role in the incorporation and maintenance of histone H3-like variant CENPA at centromeres. The chain is CENP-A histone chaperone scm3 from Schizosaccharomyces pombe (strain 972 / ATCC 24843) (Fission yeast).